The primary structure comprises 144 residues: L-fucose mutarotase (144 aa).

His-22 functions as the Proton donor in the catalytic mechanism. Residues Asp-30, Arg-109, and 131-133 (YGN) contribute to the substrate site.

It belongs to the RbsD / FucU family. FucU mutarotase subfamily. Homodecamer.

Its subcellular location is the cytoplasm. It catalyses the reaction alpha-L-fucose = beta-L-fucose. Its pathway is carbohydrate metabolism; L-fucose metabolism. Its function is as follows. Involved in the anomeric conversion of L-fucose. This chain is L-fucose mutarotase, found in Histophilus somni (strain 2336) (Haemophilus somnus).